The chain runs to 234 residues: Adenosine 5'-phosphosulfate reductase (234 aa).

[4Fe-4S] cluster contacts are provided by cysteine 120, cysteine 121, cysteine 203, and cysteine 206. The active-site Nucleophile; cysteine thiosulfonate intermediate is the cysteine 229.

The protein belongs to the PAPS reductase family. CysH subfamily. Requires [4Fe-4S] cluster as cofactor.

Its subcellular location is the cytoplasm. It carries out the reaction [thioredoxin]-disulfide + sulfite + AMP + 2 H(+) = adenosine 5'-phosphosulfate + [thioredoxin]-dithiol. It functions in the pathway sulfur metabolism; hydrogen sulfide biosynthesis; sulfite from sulfate. Catalyzes the formation of sulfite from adenosine 5'-phosphosulfate (APS) using thioredoxin as an electron donor. The chain is Adenosine 5'-phosphosulfate reductase from Bacillus cereus (strain AH820).